The following is a 131-amino-acid chain: uncharacterized protein (131 aa).

Positions 1–67 (MCSARKLLRG…HSGEPIGDDY (67 aa)) are disordered. Ser14 carries the phosphoserine modification. A helical transmembrane segment spans residues 99-119 (VVVLFFWLMLWFLGLQALGLV).

This sequence belongs to the FAM241 family.

Its subcellular location is the membrane. This is an uncharacterized protein from Mus musculus (Mouse).